The sequence spans 446 residues: Exodeoxyribonuclease 7 large subunit (446 aa).

It belongs to the XseA family. Heterooligomer composed of large and small subunits.

It is found in the cytoplasm. It catalyses the reaction Exonucleolytic cleavage in either 5'- to 3'- or 3'- to 5'-direction to yield nucleoside 5'-phosphates.. In terms of biological role, bidirectionally degrades single-stranded DNA into large acid-insoluble oligonucleotides, which are then degraded further into small acid-soluble oligonucleotides. The sequence is that of Exodeoxyribonuclease 7 large subunit from Streptococcus equi subsp. zooepidemicus (strain MGCS10565).